Consider the following 341-residue polypeptide: Putative amino-acid ABC transporter-binding protein YhdW (341 aa).

The N-terminal stretch at 1 to 19 (MKKMMIATLAAASVLLAVA) is a signal peptide.

The protein belongs to the bacterial solute-binding protein 3 family.

The protein localises to the periplasm. Functionally, probably part of the binding-protein-dependent transport system YdhWXYZ for an amino acid. The chain is Putative amino-acid ABC transporter-binding protein YhdW (yhdW) from Escherichia coli (strain K12).